Consider the following 189-residue polypeptide: Peptidyl-tRNA hydrolase (189 aa).

His-15 lines the tRNA pocket. Catalysis depends on His-20, which acts as the Proton acceptor. TRNA is bound by residues Phe-66, Asn-68, and Asn-114.

This sequence belongs to the PTH family. In terms of assembly, monomer.

It is found in the cytoplasm. It carries out the reaction an N-acyl-L-alpha-aminoacyl-tRNA + H2O = an N-acyl-L-amino acid + a tRNA + H(+). In terms of biological role, hydrolyzes ribosome-free peptidyl-tRNAs (with 1 or more amino acids incorporated), which drop off the ribosome during protein synthesis, or as a result of ribosome stalling. Catalyzes the release of premature peptidyl moieties from peptidyl-tRNA molecules trapped in stalled 50S ribosomal subunits, and thus maintains levels of free tRNAs and 50S ribosomes. This chain is Peptidyl-tRNA hydrolase, found in Streptococcus equi subsp. equi (strain 4047).